The chain runs to 168 residues: Small ribosomal subunit protein uS8 (168 aa).

The segment at 59-93 (EEFKKMKELAEKSPNPKMRRYLQQLIDYNKGTQYP) is not found in other S8 sequences.

This sequence belongs to the universal ribosomal protein uS8 family. Part of the 30S ribosomal subunit. Contacts proteins S5 and S12.

One of the primary rRNA binding proteins, it binds directly to 16S rRNA central domain where it helps coordinate assembly of the platform of the 30S subunit. This Aquifex pyrophilus protein is Small ribosomal subunit protein uS8.